The following is a 424-amino-acid chain: Anaerobic glycerol-3-phosphate dehydrogenase subunit B (424 aa).

Belongs to the anaerobic G-3-P dehydrogenase subunit B family. Composed of a catalytic GlpA/B dimer and of membrane bound GlpC. FMN is required as a cofactor.

It carries out the reaction a quinone + sn-glycerol 3-phosphate = dihydroxyacetone phosphate + a quinol. The protein operates within polyol metabolism; glycerol degradation via glycerol kinase pathway; glycerone phosphate from sn-glycerol 3-phosphate (anaerobic route): step 1/1. Its function is as follows. Conversion of glycerol 3-phosphate to dihydroxyacetone. Uses fumarate or nitrate as electron acceptor. The sequence is that of Anaerobic glycerol-3-phosphate dehydrogenase subunit B from Yersinia pestis bv. Antiqua (strain Antiqua).